The primary structure comprises 1040 residues: FHF complex subunit HOOK-interacting protein 1A (1040 aa).

Disordered regions lie at residues 555 to 613 (PQQL…PIDP), 653 to 746 (SEDM…AAHP), and 769 to 808 (LMEQNYPTPDPLLLTKEEEGKEESKGEKEKEGKKELEDEE). Positions 653–664 (SEDMKDSQEEAA) are enriched in basic and acidic residues. Residues 677 to 690 (VPINNGPLLSTQPE) show a composition bias toward polar residues. Basic and acidic residues-rich tracts occupy residues 696 to 719 (EWNRDNSDPFHSEPKEPKQEREPE) and 783 to 804 (TKEEEGKEESKGEKEKEGKKEL).

Belongs to the FHIP family. In terms of assembly, may be a component of the FTS/Hook/FHIP complex (FHF complex), composed of AKTIP/FTS, FHIP1B, and one or more members of the Hook family of proteins HOOK1, HOOK2, and HOOK3. May interact directly with AKTIP/FTS.

Functionally, probable component of the FTS/Hook/FHIP complex (FHF complex). FHF complex promotes the distribution of AP-4 complex to the perinuclear area of the cell. This is FHF complex subunit HOOK-interacting protein 1A from Homo sapiens (Human).